Here is a 150-residue protein sequence, read N- to C-terminus: MAASQCLCCSKFLFQRQNLACFLTNPHCGSLVNADGHGEVWTDWNNMSKFFQYGWRCTTNENTYSNRTLMGNWNQERYDLRNIVQPKPLPSQFGHYFETTYDTSYNNKMPLSTHRFKREPHWFPGHQPELDPPRYKCTEKSTYMNSYSKP.

Mn regions lie at residues 99–110 (TTYDTSYNNKMP) and 140–150 (KSTYMNSYSKP).

This sequence belongs to the CFAP68 family. As to quaternary structure, microtubule inner protein component of sperm flagellar doublet microtubules.

It localises to the cytoplasm. The protein resides in the cytoskeleton. It is found in the cilium axoneme. The protein localises to the flagellum axoneme. Its subcellular location is the nucleus. It localises to the cell projection. The protein resides in the cilium. Its function is as follows. Microtubule inner protein (MIP) part of the dynein-decorated doublet microtubules (DMTs) in cilia axoneme, which is required for motile cilia beating. The chain is Cilia- and flagella-associated protein 68 from Homo sapiens (Human).